We begin with the raw amino-acid sequence, 87 residues long: Insulin-related peptide 1 (87 aa).

The N-terminal stretch at 1–19 is a signal peptide; sequence MKSFMVFVLIFACFSCYYA. A propeptide spanning residues 20–44 is cleaved from the precursor; that stretch reads QESTNFYCGRTLSRALAVLCYGAES. Arg64 carries the post-translational modification Arginine amide. The propeptide occupies 68–87; sequence GPVDECCEKACSIQELMTYC.

The protein belongs to the insulin family. As to expression, DAGWWIPQHGHHALAGVR-amide: Expressed in corpora cardiaca (CC), corpora allata (CA), antennal lobe (AL) and gnathal ganglion (GNG) (at protein level). Expression in CC and CA detected in most animals, in AL and GNG in few animals (at protein level).

The protein localises to the secreted. The sequence is that of Insulin-related peptide 1 from Agrotis ipsilon (Black cutworm moth).